Reading from the N-terminus, the 197-residue chain is Isopentenyl-diphosphate Delta-isomerase (197 aa).

2 residues coordinate Mn(2+): His-41 and His-48. The Nudix hydrolase domain occupies 46–183 (RLHRAFSVFL…AWFMTVLDAA (138 aa)). Cys-83 is a catalytic residue. Cys-83 contacts Mg(2+). Position 85 (His-85) interacts with Mn(2+). A Mg(2+)-binding site is contributed by Glu-103. Positions 130 and 132 each coordinate Mn(2+). Glu-132 is an active-site residue.

It belongs to the IPP isomerase type 1 family. Mg(2+) is required as a cofactor. It depends on Mn(2+) as a cofactor.

It localises to the cytoplasm. It catalyses the reaction isopentenyl diphosphate = dimethylallyl diphosphate. The protein operates within isoprenoid biosynthesis; dimethylallyl diphosphate biosynthesis; dimethylallyl diphosphate from isopentenyl diphosphate: step 1/1. Catalyzes the 1,3-allylic rearrangement of the homoallylic substrate isopentenyl (IPP) to its highly electrophilic allylic isomer, dimethylallyl diphosphate (DMAPP). This chain is Isopentenyl-diphosphate Delta-isomerase, found in Streptomyces coelicolor (strain ATCC BAA-471 / A3(2) / M145).